The chain runs to 254 residues: Metalloprotease YcaL (254 aa).

Residues 1–19 (MKNTKLLLAIATSAALLTG) form the signal peptide. C20 is lipidated: N-palmitoyl cysteine. C20 is lipidated: S-diacylglycerol cysteine. H134 provides a ligand contact to Zn(2+). E135 is an active-site residue. The Zn(2+) site is built by H138 and E193. Positions 227–254 (GRTQSMFDSHPPSTERAQHIRDRIASGK) are disordered. A compositionally biased stretch (basic and acidic residues) spans 242-254 (RAQHIRDRIASGK).

This sequence belongs to the peptidase M48B family. The cofactor is Zn(2+).

Its subcellular location is the cell inner membrane. In terms of biological role, involved in the degradation of the LPS-assembly protein LptD. Degrades LptD that have engaged the Bam complex but are stalled at an early step in the outer membrane protein assembly process. The chain is Metalloprotease YcaL (ycaL) from Escherichia coli (strain K12).